Here is a 659-residue protein sequence, read N- to C-terminus: DNA ligase (659 aa).

NAD(+) is bound by residues 32–36 (DFEYD), 81–82 (SL), and E111. The active-site N6-AMP-lysine intermediate is the K113. NAD(+) contacts are provided by R134, E168, K280, and K304. 4 residues coordinate Zn(2+): C398, C401, C416, and C421. The 71-residue stretch at 585 to 655 (ETNSIYFQKR…KELNIPIINE (71 aa)) folds into the BRCT domain.

Belongs to the NAD-dependent DNA ligase family. LigA subfamily. Mg(2+) serves as cofactor. Mn(2+) is required as a cofactor.

The catalysed reaction is NAD(+) + (deoxyribonucleotide)n-3'-hydroxyl + 5'-phospho-(deoxyribonucleotide)m = (deoxyribonucleotide)n+m + AMP + beta-nicotinamide D-nucleotide.. Functionally, DNA ligase that catalyzes the formation of phosphodiester linkages between 5'-phosphoryl and 3'-hydroxyl groups in double-stranded DNA using NAD as a coenzyme and as the energy source for the reaction. It is essential for DNA replication and repair of damaged DNA. This is DNA ligase from Mycoplasma genitalium (strain ATCC 33530 / DSM 19775 / NCTC 10195 / G37) (Mycoplasmoides genitalium).